The primary structure comprises 103 residues: Small ribosomal subunit protein uS10 (103 aa).

The protein belongs to the universal ribosomal protein uS10 family. As to quaternary structure, part of the 30S ribosomal subunit.

In terms of biological role, involved in the binding of tRNA to the ribosomes. The chain is Small ribosomal subunit protein uS10 from Psychrobacter sp. (strain PRwf-1).